The sequence spans 1326 residues: F-box/WD repeat-containing protein 7 (1326 aa).

Disordered regions lie at residues 1 to 58, 123 to 187, 318 to 351, 399 to 549, 615 to 642, and 797 to 843; these read MERG…AEVG, DSSS…IEDE, TVSN…ALSR, GSKA…SGCS, RSNP…RNGS, and TPRS…NPPP. The span at 9–39 shows a compositional bias: polar residues; that stretch reads SSESVTSAGERTQSAVTSSTSTWVKSQASTS. The segment covering 165–187 has biased composition (acidic residues); it reads NDDDDDEEPEPEEDDEEELIEDE. Positions 320 to 348 are enriched in low complexity; it reads SNPSPAASANAAAPEEASTSNSSSTSSSA. The segment covering 403 to 464 has biased composition (polar residues); that stretch reads ANGSGTANSD…KLNLGSSLGA (62 aa). Positions 465–486 are enriched in low complexity; it reads SSCSQHRSGSSSTSKSMESSTS. The span at 495–504 shows a compositional bias: polar residues; the sequence is VYTNTNSNDY. 3 stretches are compositionally biased toward low complexity: residues 510–520, 528–546, and 616–631; these read TTSGSSTSGGS, NVSA…SQES, and SNPP…GANP. Polar residues-rich tracts occupy residues 632–642 and 797–824; these read TASVRQRRNGS and TPRS…STPG. T813 bears the Phosphothreonine mark. Residue S825 is modified to Phosphoserine. In terms of domain architecture, F-box spans 889–935; that stretch reads RDFISLLPRELALFVLSYLEPKDLLRAAQTCRSWRFLCDDNLLWKEK. 7 WD repeats span residues 992–1030, 1033–1070, 1073–1110, 1113–1150, 1153–1190, 1193–1232, and 1236–1273; these read GHDD…CLRT, GHTG…CVHT, GHTS…CLHV, GHLA…CLHT, GHTN…CKHT, GHQS…QTLS, and KHHS…FIRN.

Part of a SCF E3 ubiquitin-protein ligase complex. Interacts with Myc and puf. Interacts with CycE. In terms of tissue distribution, expressed in follicle cell epithelium and imaginal disks, particularly in the morphogenetic furrow.

The protein localises to the nucleus. Its pathway is protein modification; protein ubiquitination. Functionally, substrate recognition component of a SCF (SKP1-CUL1-F-box protein) E3 ubiquitin-protein ligase complex which mediates the ubiquitination and subsequent proteasomal degradation of target proteins. Probably recognizes and binds to phosphorylated target proteins. In the wing and eye, negatively regulates cell growth and proliferation by mediating the degradation of Myc and cyclin E, respectively. Required for endocycles, but not mitosis in follicle cell epithelium. In Drosophila melanogaster (Fruit fly), this protein is F-box/WD repeat-containing protein 7.